The chain runs to 499 residues: MQDQYILALDQGTTSSRAMLFDRNGNVVSVAQKEFRQIYPHPGWVEHDPLEIWATQAGVAAEAVTHAGLNGTSIAAIGITNQRETTIVWDRQTGHPIYNAIVWQDRRTADFCDQLKAQGLEDEVRAKTGLPVDSYFSATKIRWILDNVEGAREKAKQGKLAFGTVDSWLVWNFTKHELHITDVTNASRTMLFNIHTLQWDDALLDALDIPRSMLPEVRPSSEVYGPTKTTVFASKIPLAGIAGDQHAALFGQMCTRSGMVKNTYGTGCFLVMNTGTKPIESKNNLVTTIAWQIGDQINYALEGSIFIAGAVVQWLRDGLGIIRSASEVETLARGVEHCDGVYLVPAFAGLGAPHWNARARGTLFGVTRGTTSAHIARAALDSIAYQSMDVLKAMEADSGIHINELRVDGGACANNLLMQFQADILGVDAVRPQVSETTALGAAYLAGLATGYWKDIEELQNQWKLEHRFSPSLPADQAKACLDGWQRAIRAAKAWADAP.

Thr13 contributes to the ADP binding site. 3 residues coordinate ATP: Thr13, Thr14, and Ser15. Residue Thr13 participates in sn-glycerol 3-phosphate binding. Arg17 serves as a coordination point for ADP. Sn-glycerol 3-phosphate contacts are provided by Arg83, Glu84, Tyr135, and Asp244. Residues Arg83, Glu84, Tyr135, Asp244, and Gln245 each contribute to the glycerol site. Residues Thr266 and Gly309 each coordinate ADP. ATP-binding residues include Thr266, Gly309, Gln313, and Gly410. ADP-binding residues include Gly410 and Asn414.

Belongs to the FGGY kinase family.

It catalyses the reaction glycerol + ATP = sn-glycerol 3-phosphate + ADP + H(+). The protein operates within polyol metabolism; glycerol degradation via glycerol kinase pathway; sn-glycerol 3-phosphate from glycerol: step 1/1. With respect to regulation, inhibited by fructose 1,6-bisphosphate (FBP). Functionally, key enzyme in the regulation of glycerol uptake and metabolism. Catalyzes the phosphorylation of glycerol to yield sn-glycerol 3-phosphate. This Paraburkholderia phymatum (strain DSM 17167 / CIP 108236 / LMG 21445 / STM815) (Burkholderia phymatum) protein is Glycerol kinase.